A 262-amino-acid chain; its full sequence is Adenosylcobinamide-GDP ribazoletransferase (262 aa).

6 helical membrane-spanning segments follow: residues 43-63, 66-86, 120-140, 146-166, 191-211, and 242-262; these read YFGL…WLTQ, LPAG…TGGF, GAIA…ELAL, AGSA…SIIF, LFIL…LAAL, and AAQQ…GSIL.

This sequence belongs to the CobS family. The cofactor is Mg(2+).

It localises to the cell inner membrane. It catalyses the reaction alpha-ribazole + adenosylcob(III)inamide-GDP = adenosylcob(III)alamin + GMP + H(+). The catalysed reaction is alpha-ribazole 5'-phosphate + adenosylcob(III)inamide-GDP = adenosylcob(III)alamin 5'-phosphate + GMP + H(+). It functions in the pathway cofactor biosynthesis; adenosylcobalamin biosynthesis; adenosylcobalamin from cob(II)yrinate a,c-diamide: step 7/7. Functionally, joins adenosylcobinamide-GDP and alpha-ribazole to generate adenosylcobalamin (Ado-cobalamin). Also synthesizes adenosylcobalamin 5'-phosphate from adenosylcobinamide-GDP and alpha-ribazole 5'-phosphate. This is Adenosylcobinamide-GDP ribazoletransferase from Shewanella putrefaciens (strain CN-32 / ATCC BAA-453).